The chain runs to 35 residues: Toxin Ado1 (35 aa).

Cystine bridges form between C5–C20, C12–C25, and C19–C32.

Its subcellular location is the secreted. In terms of biological role, binds reversibly and blocks P/Q-type voltage-gated calcium channels (Cav). This chain is Toxin Ado1, found in Agriosphodrus dohrni (Japanese assassin-bug).